The following is a 175-amino-acid chain: Shikimate kinase (175 aa).

Residue 12-17 (GAGKTT) participates in ATP binding. Thr-16 lines the Mg(2+) pocket. The substrate site is built by Asp-34, Arg-58, and Gly-80. Residue Arg-117 coordinates ATP. Arg-136 contributes to the substrate binding site.

It belongs to the shikimate kinase family. As to quaternary structure, monomer. Mg(2+) is required as a cofactor.

It localises to the cytoplasm. The enzyme catalyses shikimate + ATP = 3-phosphoshikimate + ADP + H(+). The protein operates within metabolic intermediate biosynthesis; chorismate biosynthesis; chorismate from D-erythrose 4-phosphate and phosphoenolpyruvate: step 5/7. In terms of biological role, catalyzes the specific phosphorylation of the 3-hydroxyl group of shikimic acid using ATP as a cosubstrate. The protein is Shikimate kinase of Saccharopolyspora erythraea (strain ATCC 11635 / DSM 40517 / JCM 4748 / NBRC 13426 / NCIMB 8594 / NRRL 2338).